The chain runs to 317 residues: Protein phosphatase 1 regulatory subunit 3C-B (317 aa).

A CBM21 domain is found at 150–258 (RNRLKKNLVC…NNDGKNYKLV (109 aa)).

As to quaternary structure, interacts with PPP1CC catalytic subunit of PP1 and associates with glycogen. Forms complexes with glycogen phosphorylase, glycogen synthase and phosphorylase kinase which is necessary for its regulation of PP1 activity.

Acts as a glycogen-targeting subunit for PP1 and regulates its activity. Activates glycogen synthase, reduces glycogen phosphorylase activity and limits glycogen breakdown. The chain is Protein phosphatase 1 regulatory subunit 3C-B (ppp1r3cb) from Danio rerio (Zebrafish).